A 208-amino-acid chain; its full sequence is dITP/XTP pyrophosphatase (208 aa).

Residue 16 to 21 (SNNKGK) coordinates substrate. The active-site Proton acceptor is the aspartate 79. Aspartate 79 contacts Mg(2+). Substrate contacts are provided by residues serine 80, 166 to 169 (FGYD), lysine 189, and 194 to 195 (HR).

Belongs to the HAM1 NTPase family. Homodimer. Mg(2+) serves as cofactor.

It carries out the reaction XTP + H2O = XMP + diphosphate + H(+). It catalyses the reaction dITP + H2O = dIMP + diphosphate + H(+). The catalysed reaction is ITP + H2O = IMP + diphosphate + H(+). Pyrophosphatase that catalyzes the hydrolysis of nucleoside triphosphates to their monophosphate derivatives, with a high preference for the non-canonical purine nucleotides XTP (xanthosine triphosphate), dITP (deoxyinosine triphosphate) and ITP. Seems to function as a house-cleaning enzyme that removes non-canonical purine nucleotides from the nucleotide pool, thus preventing their incorporation into DNA/RNA and avoiding chromosomal lesions. The sequence is that of dITP/XTP pyrophosphatase from Acinetobacter baumannii (strain ACICU).